Consider the following 856-residue polypeptide: Protein translocase subunit SecA (856 aa).

ATP is bound by residues Gln-77, 95–99 (GEGKT), and Asp-534.

Belongs to the SecA family. In terms of assembly, monomer and homodimer. Part of the essential Sec protein translocation apparatus which comprises SecA, SecYEG and auxiliary proteins SecDF. Other proteins may also be involved.

It is found in the cell inner membrane. The protein localises to the cytoplasm. It catalyses the reaction ATP + H2O + cellular proteinSide 1 = ADP + phosphate + cellular proteinSide 2.. Its function is as follows. Part of the Sec protein translocase complex. Interacts with the SecYEG preprotein conducting channel. Has a central role in coupling the hydrolysis of ATP to the transfer of proteins into and across the cell membrane, serving as an ATP-driven molecular motor driving the stepwise translocation of polypeptide chains across the membrane. The polypeptide is Protein translocase subunit SecA (Thermosipho africanus (strain TCF52B)).